Here is a 381-residue protein sequence, read N- to C-terminus: 40-kDa huntingtin-associated protein (381 aa).

Position 2 is an N-acetylalanine (A2). The Nuclear localization signal signature appears at 34-36 (KKR). The disordered stretch occupies residues 213-260 (EHGGHPVQQPELPQQLPSVPQPSLPGPQPRPVLGSTLPLPLPPDHAPG). A compositionally biased stretch (low complexity) spans 218–230 (PVQQPELPQQLPS). Positions 231-242 (VPQPSLPGPQPR) are enriched in pro residues.

In terms of assembly, interacts with HTT (via C-terminus). Interacts with RAB5A. Found in a complex with F8A1/F8A2/F8A3, HTT and RAB5A; mediates the recruitment of HTT by RAB5A onto early endosomes.

The protein resides in the cytoplasm. It localises to the nucleus. The protein localises to the early endosome. Its subcellular location is the nuclear body. RAB5A effector molecule that is involved in vesicular trafficking of early endosomes. Mediates the recruitment of HTT by RAB5A onto early endosomes. The HTT-F8A1/F8A2/F8A3-RAB5A complex stimulates early endosomal interaction with actin filaments and inhibits interaction with microtubules, leading to the reduction of endosome motility. The protein is 40-kDa huntingtin-associated protein (F8a1) of Rattus norvegicus (Rat).